A 414-amino-acid polypeptide reads, in one-letter code: uncharacterized protein (414 aa).

Belongs to the glycosyltransferase 28 family.

This is an uncharacterized protein from Mycobacterium tuberculosis (strain CDC 1551 / Oshkosh).